The chain runs to 91 residues: B3 domain-containing protein Os03g0164300 (91 aa).

Residues 1 to 91 (MTNAKMTFAV…VLVLKVHVLK (91 aa)) constitute a DNA-binding region (TF-B3).

The protein resides in the nucleus. The protein is B3 domain-containing protein Os03g0164300 of Oryza sativa subsp. japonica (Rice).